Reading from the N-terminus, the 168-residue chain is Chorismate pyruvate-lyase (168 aa).

The substrate site is built by M36, R78, L116, and E157.

The protein belongs to the UbiC family. Monomer.

It localises to the cytoplasm. It carries out the reaction chorismate = 4-hydroxybenzoate + pyruvate. It functions in the pathway cofactor biosynthesis; ubiquinone biosynthesis. In terms of biological role, removes the pyruvyl group from chorismate, with concomitant aromatization of the ring, to provide 4-hydroxybenzoate (4HB) for the ubiquinone pathway. This is Chorismate pyruvate-lyase from Yersinia enterocolitica serotype O:8 / biotype 1B (strain NCTC 13174 / 8081).